Reading from the N-terminus, the 583-residue chain is Lipoprotein LpqB (583 aa).

The first 29 residues, 1-29 (MSNKTTEATKTTKVKKVLSVVAGLGLLAG), serve as a signal peptide directing secretion. Cys-30 carries N-palmitoyl cysteine lipidation. The S-diacylglycerol cysteine moiety is linked to residue Cys-30. A disordered region spans residues 38-63 (NPEAISSYAPAPSGQEAPTPTDGQPS).

Belongs to the LpqB lipoprotein family.

Its subcellular location is the cell membrane. This chain is Lipoprotein LpqB, found in Corynebacterium jeikeium (strain K411).